The chain runs to 266 residues: Norfluorocurarine synthase 2 (266 aa).

Residues 11–121 (HFVLVHGAGH…IMPDSTHPPI (111 aa)) form the AB hydrolase-1 domain. Active-site residues include serine 86, aspartate 216, and histidine 244.

The protein belongs to the AB hydrolase superfamily. Homodimer. As to expression, mainly expressed in roots.

It catalyses the reaction 17-dehydropreakuammicine + H2O = norfluorocurarine + methanol + CO2. The protein operates within alkaloid biosynthesis. Functionally, hydrolase involved in the biosynthesis of curare monoterpene indole alkaloids (MIAs), natural products such as strychnine, a neurotoxic compound used as a pesticide to control rodents, and its pharmacologically active derivatives, including brucine, used to regulate blood pressure. Curare alkaloids act as animal glycine receptor antagonists. Catalyzes the conversion of dehydropreakuammicine to norfluorocurarine. The polypeptide is Norfluorocurarine synthase 2 (Strychnos nux-vomica (Poison nut)).